Here is a 425-residue protein sequence, read N- to C-terminus: MAFLALGINHKTASVDVRERVAFTPEQLVDALQQLCRLTASREAAILSTCNRSELYIEQDHIAADAVLQWLADYHQLSLDELRASAYIHEEHDAVRHMMRVASGLDSLVLGEPQILGQMKSAYAVAREAGTVGPLLGRLFQATFSAAKQVRTDTAIGENPVSVAFAAVSLAKQIFSDLGRSQALLIGAGETITLVARHLHEQGVRRIVVANRTLERASILAEQFGAHAVLLADIPQELANSDIVISSTASQLPILGKGAVESALKQRRHKPIFMVDIAVPRDIEPQVGELDDVYLYTVDDLHEVVAENLKSRQGAAQAAEELVSAGADDFMVRLRELAAVDVLKAYRQQSERLRDEELQKALRLLGNGGNPEDVLMQLARGLTNKLLHAPSVQLKKLSAEGRLDALAMAQELFALHEGSTDKTPQ.

Substrate contacts are provided by residues 49–52 (TCNR), Ser107, 112–114 (EPQ), and Gln118. Cys50 (nucleophile) is an active-site residue. Residue 187-192 (GAGETI) participates in NADP(+) binding.

Belongs to the glutamyl-tRNA reductase family. In terms of assembly, homodimer.

The catalysed reaction is (S)-4-amino-5-oxopentanoate + tRNA(Glu) + NADP(+) = L-glutamyl-tRNA(Glu) + NADPH + H(+). The protein operates within porphyrin-containing compound metabolism; protoporphyrin-IX biosynthesis; 5-aminolevulinate from L-glutamyl-tRNA(Glu): step 1/2. Its function is as follows. Catalyzes the NADPH-dependent reduction of glutamyl-tRNA(Glu) to glutamate 1-semialdehyde (GSA). The sequence is that of Glutamyl-tRNA reductase from Pseudomonas entomophila (strain L48).